Here is a 246-residue protein sequence, read N- to C-terminus: MVFEVIPAVDMRGGKCVQLVQGVPGSEIVSIDDPLAVALDWVSKGAKTLHLVDLDGAIEGERKNSPIIEKIVNTCKEKGVSIQVGGGIRSFEDAASLLEIGVSRIILGTAALQNPELVKQLSSSFGSSHVNVALDAKNGKISIKGWTEECAQTPVEMGRKFEELGAGSLLFTNIDTEGLMQGVNPVPTKELVESVSIPVIASGGVSTLEDIKTLKKTGAAGVVVGSALYMGRFTLEEAINAALGDI.

Asp10 (proton acceptor) is an active-site residue. Asp135 functions as the Proton donor in the catalytic mechanism.

It belongs to the HisA/HisF family.

It is found in the cytoplasm. The catalysed reaction is 1-(5-phospho-beta-D-ribosyl)-5-[(5-phospho-beta-D-ribosylamino)methylideneamino]imidazole-4-carboxamide = 5-[(5-phospho-1-deoxy-D-ribulos-1-ylimino)methylamino]-1-(5-phospho-beta-D-ribosyl)imidazole-4-carboxamide. It participates in amino-acid biosynthesis; L-histidine biosynthesis; L-histidine from 5-phospho-alpha-D-ribose 1-diphosphate: step 4/9. This is 1-(5-phosphoribosyl)-5-[(5-phosphoribosylamino)methylideneamino] imidazole-4-carboxamide isomerase from Methanosarcina mazei (strain ATCC BAA-159 / DSM 3647 / Goe1 / Go1 / JCM 11833 / OCM 88) (Methanosarcina frisia).